We begin with the raw amino-acid sequence, 108 residues long: Nucleoid-associated protein BQ02190 (108 aa).

Belongs to the YbaB/EbfC family. Homodimer.

The protein localises to the cytoplasm. Its subcellular location is the nucleoid. Functionally, binds to DNA and alters its conformation. May be involved in regulation of gene expression, nucleoid organization and DNA protection. In Bartonella quintana (strain Toulouse) (Rochalimaea quintana), this protein is Nucleoid-associated protein BQ02190.